The primary structure comprises 326 residues: Putative ribose-phosphate pyrophosphokinase 2 (326 aa).

ATP-binding positions include 43–45 (DGE) and 102–103 (RQ). Position 136 (H136) interacts with Mg(2+). D-ribose 5-phosphate is bound by residues D225 and 229-233 (NTGKT).

The protein belongs to the ribose-phosphate pyrophosphokinase family. Class I subfamily. Homohexamer. The cofactor is Mg(2+).

It is found in the cytoplasm. It catalyses the reaction D-ribose 5-phosphate + ATP = 5-phospho-alpha-D-ribose 1-diphosphate + AMP + H(+). Its pathway is metabolic intermediate biosynthesis; 5-phospho-alpha-D-ribose 1-diphosphate biosynthesis; 5-phospho-alpha-D-ribose 1-diphosphate from D-ribose 5-phosphate (route I): step 1/1. Involved in the biosynthesis of the central metabolite phospho-alpha-D-ribosyl-1-pyrophosphate (PRPP) via the transfer of pyrophosphoryl group from ATP to 1-hydroxyl of ribose-5-phosphate (Rib-5-P). The sequence is that of Putative ribose-phosphate pyrophosphokinase 2 from Streptococcus pyogenes serotype M3 (strain SSI-1).